Reading from the N-terminus, the 651-residue chain is Intraflagellar transport protein 70A (651 aa).

7 TPR repeats span residues 8–41 (DGEY…QYRS), 42–75 (RAGL…TPEV), 140–173 (PESE…MGYK), 175–207 (DLSY…GIRE), 372–405 (LTEQ…YDET), 410–443 (IPVL…CNEH), and 445–478 (IWKL…HYDN). The stretch at 494 to 521 (YIMTSQNEEAEELMRKIEKEEEQIAYEN) forms a coiled coil. A TPR 8 repeat occupies 530–563 (CIVNLVIGTLYCAKGNYEFGISRVIKSLEPYNKK).

Belongs to the TTC30/dfy-1/fleer family.

It localises to the cell projection. Its subcellular location is the cilium. Required for polyglutamylation of axonemal tubulin. Plays a role in anterograde intraflagellar transport (IFT), the process by which cilia precursors are transported from the base of the cilium to the site of their incorporation at the tip. The protein is Intraflagellar transport protein 70A (ift70a) of Xenopus tropicalis (Western clawed frog).